Here is a 158-residue protein sequence, read N- to C-terminus: UPF0262 protein Rsph17025_0594 (158 aa).

This sequence belongs to the UPF0262 family.

This Cereibacter sphaeroides (strain ATCC 17025 / ATH 2.4.3) (Rhodobacter sphaeroides) protein is UPF0262 protein Rsph17025_0594.